The primary structure comprises 95 residues: Co-chaperonin GroES (95 aa).

It belongs to the GroES chaperonin family. As to quaternary structure, heptamer of 7 subunits arranged in a ring. Interacts with the chaperonin GroEL.

The protein resides in the cytoplasm. Its function is as follows. Together with the chaperonin GroEL, plays an essential role in assisting protein folding. The GroEL-GroES system forms a nano-cage that allows encapsulation of the non-native substrate proteins and provides a physical environment optimized to promote and accelerate protein folding. GroES binds to the apical surface of the GroEL ring, thereby capping the opening of the GroEL channel. The sequence is that of Co-chaperonin GroES from Jannaschia sp. (strain CCS1).